Reading from the N-terminus, the 608-residue chain is Albumin 1 (608 aa).

Residues 1–14 (MQWLSVCSLLVLLS) form the signal peptide. A propeptide spanning residues 15 to 18 (VLSR) is cleaved from the precursor. 3 Albumin domains span residues 19-205 (SQAQ…TFQH), 206-398 (AVMK…AGSD), and 402-600 (KITD…KLVS). Intrachain disulfides connect Cys26–Cys72, Cys71–Cys80, Cys93–Cys108, Cys107–Cys118, Cys142–Cys187, Cys186–Cys195, Cys218–Cys264, Cys263–Cys271, Cys283–Cys299, Cys298–Cys309, Cys336–Cys381, Cys380–Cys389, Cys414–Cys460, Cys459–Cys471, Cys484–Cys500, Cys499–Cys510, Cys537–Cys582, and Cys581–Cys590. A glycan (N-linked (GlcNAc...) asparagine) is linked at Asn501.

The protein belongs to the ALB/AFP/VDB family. In terms of tissue distribution, plasma.

The protein localises to the secreted. In terms of biological role, binds water, Ca(2+), Na(+), K(+), fatty acids, hormones, bilirubin and drugs. Its main function is the regulation of the colloidal osmotic pressure of blood. The sequence is that of Albumin 1 (alb1) from Salmo salar (Atlantic salmon).